A 294-amino-acid chain; its full sequence is tRNA dimethylallyltransferase (294 aa).

10–17 (GPTAVGKT) is an ATP binding site. Residue 12 to 17 (TAVGKT) coordinates substrate. Positions 35–38 (DSQQ) are interaction with substrate tRNA.

This sequence belongs to the IPP transferase family. As to quaternary structure, monomer. Mg(2+) serves as cofactor.

The enzyme catalyses adenosine(37) in tRNA + dimethylallyl diphosphate = N(6)-dimethylallyladenosine(37) in tRNA + diphosphate. Functionally, catalyzes the transfer of a dimethylallyl group onto the adenine at position 37 in tRNAs that read codons beginning with uridine, leading to the formation of N6-(dimethylallyl)adenosine (i(6)A). This is tRNA dimethylallyltransferase from Streptococcus suis (strain 98HAH33).